The sequence spans 179 residues: Large ribosomal subunit protein uL6 (179 aa).

It belongs to the universal ribosomal protein uL6 family. In terms of assembly, part of the 50S ribosomal subunit.

This protein binds to the 23S rRNA, and is important in its secondary structure. It is located near the subunit interface in the base of the L7/L12 stalk, and near the tRNA binding site of the peptidyltransferase center. In Buchnera aphidicola subsp. Baizongia pistaciae (strain Bp), this protein is Large ribosomal subunit protein uL6.